Reading from the N-terminus, the 201-residue chain is Peptide deformylase (201 aa).

Fe cation is bound by residues cysteine 121 and histidine 163. The active site involves glutamate 164. Position 167 (histidine 167) interacts with Fe cation.

The protein belongs to the polypeptide deformylase family. Requires Fe(2+) as cofactor.

It carries out the reaction N-terminal N-formyl-L-methionyl-[peptide] + H2O = N-terminal L-methionyl-[peptide] + formate. Functionally, removes the formyl group from the N-terminal Met of newly synthesized proteins. Requires at least a dipeptide for an efficient rate of reaction. N-terminal L-methionine is a prerequisite for activity but the enzyme has broad specificity at other positions. The polypeptide is Peptide deformylase (Synechococcus sp. (strain CC9902)).